A 64-amino-acid chain; its full sequence is Alpha-mammal toxin AnCra1 (64 aa).

The 63-residue stretch at 2 to 64 (KDGYIVDDVN…VRTKGPGRCN (63 aa)) folds into the LCN-type CS-alpha/beta domain. Disulfide bonds link Cys12–Cys63, Cys16–Cys36, Cys22–Cys46, and Cys26–Cys48.

Belongs to the long (4 C-C) scorpion toxin superfamily. Sodium channel inhibitor family. Alpha subfamily. In terms of tissue distribution, expressed by the venom gland.

The protein localises to the secreted. In terms of biological role, alpha toxins bind voltage-independently at site-3 of sodium channels (Nav) and inhibit the inactivation of the activated channels, thereby blocking neuronal transmission. This toxin is active against mammals. The recombinant toxin selectively inhibits the fast inactivation of hNav1.7/SCN9A channel (EC(50)=136.7 nM). Is potent in inhibiting the fast inactivation of hNav1.7 and has little effect on the steady-state inactivation. In vivo, intravenous injection into mice induces muscle contraction, leading to severe paralysis and death. The polypeptide is Alpha-mammal toxin AnCra1 (Androctonus crassicauda (Arabian fat-tailed scorpion)).